Consider the following 129-residue polypeptide: Small ribosomal subunit protein uS12 (129 aa).

Disordered stretches follow at residues 1–25 (MPTY…PALE) and 110–129 (RKQG…VTKK). Residues 10–20 (FGRKSKTRKTK) show a composition bias toward basic residues.

This sequence belongs to the universal ribosomal protein uS12 family. In terms of assembly, part of the 30S ribosomal subunit. Contacts proteins S8 and S17. May interact with IF1 in the 30S initiation complex.

Functionally, with S4 and S5 plays an important role in translational accuracy. Interacts with and stabilizes bases of the 16S rRNA that are involved in tRNA selection in the A site and with the mRNA backbone. Located at the interface of the 30S and 50S subunits, it traverses the body of the 30S subunit contacting proteins on the other side and probably holding the rRNA structure together. The combined cluster of proteins S8, S12 and S17 appears to hold together the shoulder and platform of the 30S subunit. The chain is Small ribosomal subunit protein uS12 from Rickettsia conorii (strain ATCC VR-613 / Malish 7).